Reading from the N-terminus, the 782-residue chain is Translation initiation factor IF-2 (782 aa).

Residues 47–196 form a disordered region; the sequence is DNAIDGTNKK…TPPKPKELPE (150 aa). Positions 53–65 are enriched in basic and acidic residues; it reads TNKKAEAPKKETT. The segment covering 66 to 81 has biased composition (polar residues); sequence SNENGNSKGPNKPNMT. Positions 82-93 are enriched in low complexity; that stretch reads NSNEKSNKPNKP. Over residues 115 to 129 the composition is skewed to polar residues; that stretch reads KPANTSNQTQSSGNK. Residues 133–170 show a composition bias toward low complexity; sequence GGQKRNNNNNSNRPGGGNPNRPGGNNRPNRGGNFNNKG. The tr-type G domain maps to 283-452; that stretch reads ERPPVVTIMG…LLVSEVEELK (170 aa). Positions 292–299 are G1; sequence GHVDHGKT. Residue 292–299 coordinates GTP; it reads GHVDHGKT. The interval 317–321 is G2; that stretch reads GITQH. The G3 stretch occupies residues 338-341; the sequence is DTPG. GTP contacts are provided by residues 338-342 and 392-395; these read DTPGH and NKID. The tract at residues 392 to 395 is G4; sequence NKID. The tract at residues 428 to 430 is G5; sequence SAK.

Belongs to the TRAFAC class translation factor GTPase superfamily. Classic translation factor GTPase family. IF-2 subfamily.

It is found in the cytoplasm. One of the essential components for the initiation of protein synthesis. Protects formylmethionyl-tRNA from spontaneous hydrolysis and promotes its binding to the 30S ribosomal subunits. Also involved in the hydrolysis of GTP during the formation of the 70S ribosomal complex. The sequence is that of Translation initiation factor IF-2 from Listeria innocua serovar 6a (strain ATCC BAA-680 / CLIP 11262).